Here is a 380-residue protein sequence, read N- to C-terminus: Chaperone protein DnaJ (380 aa).

The J domain maps to 5-70 (DFYDVLGVNR…QKRAAYDQYG (66 aa)). The CR-type zinc finger occupies 139-217 (GCEKQIRIPT…CHGAGRVKSQ (79 aa)). Residues Cys-152, Cys-155, Cys-169, Cys-172, Cys-191, Cys-194, Cys-205, and Cys-208 each contribute to the Zn(2+) site. CXXCXGXG motif repeat units follow at residues 152-159 (CSHCHGSG), 169-176 (CPTCGGAG), 191-198 (CPTCHGSG), and 205-212 (CNICHGAG).

It belongs to the DnaJ family. In terms of assembly, homodimer. The cofactor is Zn(2+).

It is found in the cytoplasm. Participates actively in the response to hyperosmotic and heat shock by preventing the aggregation of stress-denatured proteins and by disaggregating proteins, also in an autonomous, DnaK-independent fashion. Unfolded proteins bind initially to DnaJ; upon interaction with the DnaJ-bound protein, DnaK hydrolyzes its bound ATP, resulting in the formation of a stable complex. GrpE releases ADP from DnaK; ATP binding to DnaK triggers the release of the substrate protein, thus completing the reaction cycle. Several rounds of ATP-dependent interactions between DnaJ, DnaK and GrpE are required for fully efficient folding. Also involved, together with DnaK and GrpE, in the DNA replication of plasmids through activation of initiation proteins. The chain is Chaperone protein DnaJ from Laribacter hongkongensis (strain HLHK9).